The following is a 518-amino-acid chain: Prosaposin (518 aa).

Positions 1–17 (MARRLLTLLGLLAAAVA) are cleaved as a signal peptide. Positions 18-60 (SPVLWQKDCAKGPEVWCQSLRTASQCGAVKHCQQNVWSKPAVN) are excised as a propeptide. The Saposin A-type 1 domain maps to 19–59 (PVLWQKDCAKGPEVWCQSLRTASQCGAVKHCQQNVWSKPAV). Saposin B-type domains follow at residues 60–143 (NSIP…QSLQ), 193–277 (TEDV…PSVK), 307–388 (TFSV…AANK), and 399–480 (AGGF…GAAK). Intrachain disulfides connect cysteine 64–cysteine 139, cysteine 67–cysteine 133, and cysteine 95–cysteine 107. An N-linked (GlcNAc...) asparagine glycan is attached at asparagine 81. Residues 144–193 (KHLAAMKLQKQLQSNKIPELDFSELTSPFMANVPLLLYPQDKPKQKSKAT) constitute a propeptide that is removed on maturation. Intrachain disulfides connect cysteine 197-cysteine 273, cysteine 200-cysteine 267, and cysteine 229-cysteine 240. N-linked (GlcNAc...) asparagine glycosylation is present at asparagine 214. Positions 277 to 306 (KSVPLQTLVPAQVVHEVKMETVEKATVQEK) are excised as a propeptide. Disulfide bonds link cysteine 311–cysteine 384, cysteine 314–cysteine 378, and cysteine 342–cysteine 353. N-linked (GlcNAc...) asparagine glycosylation occurs at asparagine 328. A propeptide spanning residues 388–398 (KPPQQPVVVKP) is cleaved from the precursor. 3 disulfide bridges follow: cysteine 403-cysteine 476, cysteine 406-cysteine 470, and cysteine 434-cysteine 445. Asparagine 420 is a glycosylation site (N-linked (GlcNAc...) asparagine). The propeptide occupies 480–518 (KKPLLGEDACVWGPGYWCKNMETAAQCNAVDHCRRHVWN). Residues 482-518 (PLLGEDACVWGPGYWCKNMETAAQCNAVDHCRRHVWN) enclose the Saposin A-type 2 domain.

In terms of assembly, saposin-B is a homodimer. In terms of processing, this precursor is proteolytically processed to 4 small peptides, which are similar to each other and are sphingolipid hydrolase activator proteins.

The protein localises to the lysosome. Its subcellular location is the secreted. Functionally, the lysosomal degradation of sphingolipids takes place by the sequential action of specific hydrolases. Some of these enzymes require specific low-molecular mass, non-enzymatic proteins: the sphingolipids activator proteins (coproteins). Its function is as follows. Saposin-A and saposin-C stimulate the hydrolysis of glucosylceramide by beta-glucosylceramidase (EC 3.2.1.45) and galactosylceramide by beta-galactosylceramidase (EC 3.2.1.46). Saposin-C apparently acts by combining with the enzyme and acidic lipid to form an activated complex, rather than by solubilizing the substrate. In terms of biological role, saposin-B stimulates the hydrolysis of galacto-cerebroside sulfate by arylsulfatase A (EC 3.1.6.8), GM1 gangliosides by beta-galactosidase (EC 3.2.1.23) and globotriaosylceramide by alpha-galactosidase A (EC 3.2.1.22). Saposin-B forms a solubilizing complex with the substrates of the sphingolipid hydrolases. Saposin-D is a specific sphingomyelin phosphodiesterase activator (EC 3.1.4.12). The chain is Prosaposin (PSAP) from Gallus gallus (Chicken).